The primary structure comprises 566 residues: Cytoplasmic polyadenylation element-binding protein 2 (566 aa).

Disordered regions lie at residues 17-46 (FWGN…SVEG) and 64-98 (LERL…IQEQ). Positions 87–98 (DSEEEEEDIQEQ) are enriched in acidic residues. Residues 430 to 512 (MVAFIGGVPR…KRVEIKPYFF (83 aa)) form the RRM domain.

Functionally, cytoplasmic polyadenylation element binding protein that binds to and regulates the translation of specific mRNAs. In Caenorhabditis briggsae, this protein is Cytoplasmic polyadenylation element-binding protein 2 (cpb-2).